Reading from the N-terminus, the 144-residue chain is Endoribonuclease YbeY (144 aa).

His104, His108, and His114 together coordinate Zn(2+).

This sequence belongs to the endoribonuclease YbeY family. It depends on Zn(2+) as a cofactor.

It localises to the cytoplasm. Functionally, single strand-specific metallo-endoribonuclease involved in late-stage 70S ribosome quality control and in maturation of the 3' terminus of the 16S rRNA. The polypeptide is Endoribonuclease YbeY (Nitratiruptor sp. (strain SB155-2)).